The sequence spans 568 residues: Periplasmic trehalase (568 aa).

The N-terminal stretch at 1–38 is a signal peptide; that stretch reads MPHAPARSGDAMSAAAPPCCTSLLGLSLSMFVAPCALA. Residues R169, 176 to 177, N213, 222 to 224, 294 to 296, and G327 contribute to the substrate site; these read WD, RSQ, and RPE. Active-site proton donor/acceptor residues include D329 and E511. Residue E526 participates in substrate binding.

Belongs to the glycosyl hydrolase 37 family.

Its subcellular location is the periplasm. It catalyses the reaction alpha,alpha-trehalose + H2O = alpha-D-glucose + beta-D-glucose. Its function is as follows. Provides the cells with the ability to utilize trehalose at high osmolarity by splitting it into glucose molecules that can subsequently be taken up by the phosphotransferase-mediated uptake system. The chain is Periplasmic trehalase from Xanthomonas campestris pv. campestris (strain B100).